A 47-amino-acid chain; its full sequence is Variabilin (47 aa).

Residues 32–34 (RGD) carry the Cell attachment site motif.

Post-translationally, contains 2 disulfide bonds. In terms of tissue distribution, expressed in salivary glands.

Its subcellular location is the secreted. Its function is as follows. Potently inhibits platelet aggregation induced by ADP (IC(50)=157 nM, complete inhibition at 514 nM). Also inhibits platelet aggregation induced by collagen and by the thrombin receptor peptide SFLLRNP. Is a potent antagonist of the fibrinogen receptor glycoprotein IIb-IIIa (ITGA2B/ITGB3) and the vitronectin receptor alpha-v/beta-3 (ITGAV/ITGB3). This chain is Variabilin, found in Dermacentor variabilis (American dog tick).